The primary structure comprises 645 residues: Threonine--tRNA ligase (645 aa).

In terms of domain architecture, TGS spans 1–63 (MEQINIQFPD…ETDGSIEIVT (63 aa)). The catalytic stretch occupies residues 242–540 (DHRKIGKELE…LTEETKGAFP (299 aa)). Residues cysteine 336, histidine 387, and histidine 517 each coordinate Zn(2+).

It belongs to the class-II aminoacyl-tRNA synthetase family. As to quaternary structure, homodimer. The cofactor is Zn(2+).

It localises to the cytoplasm. It catalyses the reaction tRNA(Thr) + L-threonine + ATP = L-threonyl-tRNA(Thr) + AMP + diphosphate + H(+). Its function is as follows. Catalyzes the attachment of threonine to tRNA(Thr) in a two-step reaction: L-threonine is first activated by ATP to form Thr-AMP and then transferred to the acceptor end of tRNA(Thr). Also edits incorrectly charged L-seryl-tRNA(Thr). The sequence is that of Threonine--tRNA ligase from Staphylococcus aureus (strain bovine RF122 / ET3-1).